Here is a 102-residue protein sequence, read N- to C-terminus: Small ribosomal subunit protein uS10 (102 aa).

It belongs to the universal ribosomal protein uS10 family. Part of the 30S ribosomal subunit.

Functionally, involved in the binding of tRNA to the ribosomes. The sequence is that of Small ribosomal subunit protein uS10 from Pediococcus pentosaceus (strain ATCC 25745 / CCUG 21536 / LMG 10740 / 183-1w).